Here is a 1959-residue protein sequence, read N- to C-terminus: Zinc finger protein hangover (1959 aa).

A ZAD domain is found at 79 to 155 (NCCRLCIAPQ…FSSQAKQRQW (77 aa)). 4 residues coordinate Zn(2+): Cys-81, Cys-84, Cys-128, and Cys-131. The interval 178-208 (GFFDQHLHQQQQHHQHLENELEAEKEKATPT) is disordered. Residues 192-205 (QHLENELEAEKEKA) are compositionally biased toward basic and acidic residues. At Ser-228 the chain carries Phosphoserine. Phosphothreonine is present on Thr-246. A C2H2-type 1 zinc finger spans residues 318–341 (ASCRACSLQFSTRANARRHERNLH). A C2H2-type 2; degenerate zinc finger spans residues 447–469 (MTCRCCNKYFSTYKNFMAHVRKK). The C2H2-type 3 zinc finger occupies 581-604 (YECKLCPKGFRTKHEFRTHVYDKH). Residues 674 to 762 (AVSDNASTTG…ANRDASAPKS (89 aa)) form a disordered region. Over residues 677 to 693 (DNASTTGSGMARSNSME) the composition is skewed to polar residues. At Ser-680 the chain carries Phosphoserine. Composition is skewed to low complexity over residues 716–727 (SSSAAPPLTSTP) and 741–759 (TSAS…DASA). C2H2-type zinc fingers lie at residues 770–793 (QVCP…ESKH) and 801–824 (YKCV…INVH). A phosphoserine mark is found at Ser-832, Ser-894, Ser-895, Ser-898, and Ser-899. The segment at 908–930 (KECPICNAVFSNNIGLSNHMRSH) adopts a C2H2-type 6 zinc-finger fold. The disordered stretch occupies residues 960–991 (TDSELGVGGTMSESAPATPANVPPAMANQTPQ). 5 C2H2-type zinc fingers span residues 1011–1034 (MRCR…LTDH), 1042–1065 (IKCK…FKVH), 1078–1101 (FECD…RSVH), 1154–1176 (YQCK…INSH), and 1184–1207 (YSCK…YKKH). The span at 1233-1253 (TPTCNRKPITSTGAHQQQDGQ) shows a compositional bias: polar residues. The tract at residues 1233-1301 (TPTCNRKPIT…GNGTTVGVAS (69 aa)) is disordered. The segment covering 1255–1267 (HSHHTAKRTIFRH) has biased composition (basic residues). Residues 1271 to 1283 (DDDDEEDDDEQQQ) show a composition bias toward acidic residues. 2 consecutive C2H2-type zinc fingers follow at residues 1318-1340 (VACT…IQKH) and 1375-1397 (YACD…RKWH). Positions 1445–1467 (QQSLNNSCNSSMNHNNNSSSNRS) are enriched in low complexity. Positions 1445 to 1471 (QQSLNNSCNSSMNHNNNSSSNRSKSMK) are disordered. 2 consecutive C2H2-type zinc fingers follow at residues 1476-1499 (LKCE…YELH) and 1552-1574 (WGCD…INNH). A disordered region spans residues 1627-1865 (AAGATTTDKL…STGERRKKAV (239 aa)). Acidic residues predominate over residues 1639–1695 (PDEEDSDDLDEDSSGDDDDSSGTGDDDDDDDSDDDEDGEGEDEDEEGDGGEGEDEEG). The span at 1697-1715 (QPPAQLLPQQQHKTDLNLN) shows a compositional bias: low complexity. 2 stretches are compositionally biased toward acidic residues: residues 1716-1758 (QDDD…EEPE) and 1782-1829 (SDDE…EDEP). Positions 1833–1851 (STASFSESESSTTTTSNSH) are enriched in low complexity. The C2H2-type 16 zinc-finger motif lies at 1873–1895 (FTCDLCQLCFDSQELLQSHIKSH). Positions 1933-1959 (PDSKSAVLANNNNSKTSSKTVAAGATN) are disordered. Positions 1942–1952 (NNNNSKTSSKT) are enriched in low complexity.

In terms of tissue distribution, expressed ubiquitously in the nervous system, in neurons not glia.

The protein localises to the nucleus. In terms of biological role, required for normal development of ethanol tolerance. Relies on two distinct molecular pathways: a cellular stress pathway defined by hang, and a parallel pathway requiring octopamine. The chain is Zinc finger protein hangover (hang) from Drosophila melanogaster (Fruit fly).